Consider the following 83-residue polypeptide: Apolipoprotein C-I (83 aa).

A signal peptide spans 1–26 (MRLFLSLPVLVVVLSIVLEGPAPAQG).

Belongs to the apolipoprotein C1 family. Synthesized mainly in liver and to a minor degree in intestine. Also found in the lung and spleen.

It localises to the secreted. Inhibitor of lipoprotein binding to the low density lipoprotein (LDL) receptor, LDL receptor-related protein, and very low density lipoprotein (VLDL) receptor. Associates with high density lipoproteins (HDL) and the triacylglycerol-rich lipoproteins in the plasma and makes up about 10% of the protein of the VLDL and 2% of that of HDL. Appears to interfere directly with fatty acid uptake and is also the major plasma inhibitor of cholesteryl ester transfer protein (CETP). Binds free fatty acids and reduces their intracellular esterification. Modulates the interaction of APOE with beta-migrating VLDL and inhibits binding of beta-VLDL to the LDL receptor-related protein. The polypeptide is Apolipoprotein C-I (APOC1) (Homo sapiens (Human)).